A 189-amino-acid polypeptide reads, in one-letter code: Inosine triphosphate pyrophosphatase (189 aa).

Residue 8 to 13 participates in ITP binding; that stretch reads TGNANK. Residue glutamate 39 participates in Mg(2+) binding. ITP contacts are provided by residues lysine 51, 67–68, lysine 84, 143–146, lysine 167, and 172–173; these read DT, FGWD, and HR.

Belongs to the HAM1 NTPase family. Homodimer. The cofactor is Mg(2+). Mn(2+) is required as a cofactor.

Its subcellular location is the cytoplasm. It localises to the nucleus. It catalyses the reaction ITP + H2O = IMP + diphosphate + H(+). The enzyme catalyses dITP + H2O = dIMP + diphosphate + H(+). It carries out the reaction XTP + H2O = XMP + diphosphate + H(+). In terms of biological role, pyrophosphatase that hydrolyzes non-canonical purine nucleotides such as inosine triphosphate (ITP), deoxyinosine triphosphate (dITP) or xanthosine 5'-triphosphate (XTP) to their respective monophosphate derivatives. The enzyme does not distinguish between the deoxy- and ribose forms. Probably excludes non-canonical purines from RNA and DNA precursor pools, thus preventing their incorporation into RNA and DNA and avoiding chromosomal lesions. In Cryptococcus neoformans var. neoformans serotype D (strain JEC21 / ATCC MYA-565) (Filobasidiella neoformans), this protein is Inosine triphosphate pyrophosphatase.